The chain runs to 173 residues: Mesogenin-1 (173 aa).

Over residues 39-68 the composition is skewed to polar residues; that stretch reads ESYSLSQTPSPQSVSPAASYESTYSSSPHT. Disordered regions lie at residues 39–69 and 96–117; these read ESYS…PHTG and TKKD…ASER. Residues 99–114 are compositionally biased toward basic residues; that stretch reads DHGHKTSMTTHRRRKA. The 55-residue stretch at 109–163 folds into the bHLH domain; sequence HRRRKASEREKLRMRAIAEALHTLRNNLPPMYSQGRQPLTKIQTLKCTINYISEL.

The protein resides in the nucleus. In terms of biological role, involved in specifying the paraxial, but not dorsal, mesoderm. May regulate the expression of T-box transcription factors required for mesoderm formation and differentiation, such as brachyury T, wnt8, vegt and eomes. In Xenopus laevis (African clawed frog), this protein is Mesogenin-1 (msgn1).